We begin with the raw amino-acid sequence, 372 residues long: Lipoyl synthase, mitochondrial (372 aa).

7 residues coordinate [4Fe-4S] cluster: C103, C108, C114, C134, C138, C141, and S349. The 220-residue stretch at 119–338 folds into the Radical SAM core domain; that stretch reads EHGTQTATIM…EERGNQLGFL (220 aa).

Belongs to the radical SAM superfamily. Lipoyl synthase family. The cofactor is [4Fe-4S] cluster.

It is found in the mitochondrion. The enzyme catalyses [[Fe-S] cluster scaffold protein carrying a second [4Fe-4S](2+) cluster] + N(6)-octanoyl-L-lysyl-[protein] + 2 oxidized [2Fe-2S]-[ferredoxin] + 2 S-adenosyl-L-methionine + 4 H(+) = [[Fe-S] cluster scaffold protein] + N(6)-[(R)-dihydrolipoyl]-L-lysyl-[protein] + 4 Fe(3+) + 2 hydrogen sulfide + 2 5'-deoxyadenosine + 2 L-methionine + 2 reduced [2Fe-2S]-[ferredoxin]. It functions in the pathway protein modification; protein lipoylation via endogenous pathway; protein N(6)-(lipoyl)lysine from octanoyl-[acyl-carrier-protein]: step 2/2. In terms of biological role, catalyzes the radical-mediated insertion of two sulfur atoms into the C-6 and C-8 positions of the octanoyl moiety bound to the lipoyl domains of lipoate-dependent enzymes, thereby converting the octanoylated domains into lipoylated derivatives. The chain is Lipoyl synthase, mitochondrial from Drosophila willistoni (Fruit fly).